The following is a 222-amino-acid chain: Homing endonuclease I-ApeI (222 aa).

As to quaternary structure, probably functions as a monomer. Mg(2+) serves as cofactor. The cofactor is Mn(2+).

Functionally, endonuclease involved in 16S rRNA intron I-alpha homing. Recognizes the minimal target 5'-GCAAGGCTGAAACTTAAAGG-3'; generates 4 base 3' protruding ends 5'-AAAC-3' and 5'-GTTT-3'. This Aeropyrum pernix (strain ATCC 700893 / DSM 11879 / JCM 9820 / NBRC 100138 / K1) protein is Homing endonuclease I-ApeI (apeI).